A 214-amino-acid polypeptide reads, in one-letter code: ATP synthase subunit 5, mitochondrial (214 aa).

The transit peptide at 1–24 (MFASRAIRMMSMRPMARTMATKAA) directs the protein to the mitochondrion.

In terms of assembly, F-type ATP synthases have 2 components, the catalytic core F(1) and the membrane-embedded component F(0), linked together by a central stalk and a peripheral stalk. The central stalk, also called rotor shaft, is often seen as part of F(1). The peripheral stalk is seen as part of F(0). F(0) contains the membrane channel next to the rotor. F-type ATP synthases form dimers but each monomer functions independently in ATP generation. The dimer consists of 17 different polypeptides: ATP1 (subunit alpha, 3 molecules per monomer, part of F(1)), ATP2 (subunit beta, 3 copies per monomer, part of F(1)), ATP3 (subunit gamma, part of the central stalk), ATP4 (subunit b, part of the peripheral stalk), ATP5/OSCP (subunit 5/OSCP, part of the peripheral stalk), ATP6 (subunit a, part of the peripheral stalk), ATP7 (subunit d, part of the peripheral stalk), ATP8 (subunit 8, part of the peripheral stalk), OLI1 (subunit c, part of the rotor, 10 molecules per monomer), ATP14 (subunit h, part of the peripheral stalk), ATP15 (subunit epsilon, part of the central stalk), ATP16 (subunit delta, part of the central stalk), ATP17 (subunit f, part of the peripheral stalk), ATP18 (subunit i/j, part of the peripheral stalk), ATP19 (subunit k, dimer-specific, at interface between monomers), ATP20 (subunit g, at interface between monomers), TIM11 (subunit e, at interface between monomers).

The protein resides in the mitochondrion inner membrane. Mitochondrial membrane ATP synthase (F(1)F(0) ATP synthase or Complex V) produces ATP from ADP in the presence of a proton gradient across the membrane which is generated by electron transport complexes of the respiratory chain. F-type ATP synthases consist of two structural domains, F(1) - containing the extramembraneous catalytic core, and F(0) - containing the membrane proton channel, linked together by a central stalk and a peripheral stalk. During catalysis, ATP synthesis in the catalytic domain of F(1) is coupled via a rotary mechanism of the central stalk subunits to proton translocation. Part of the complex F(0) domain and the peripheral stalk, which acts as a stator to hold the catalytic alpha/ATP1(3)beta/ATP2(3) subcomplex and subunit a/ATP6 static relative to the rotary elements. The protein is ATP synthase subunit 5, mitochondrial of Yarrowia lipolytica (strain CLIB 122 / E 150) (Yeast).